Here is a 438-residue protein sequence, read N- to C-terminus: MLDINLFREEKGGNPEIVRESQRRRGASVEIVDEIIKLDKEWRQRQFELEQLRKDFNRINKEVAKLRISGGDASSLIKNTEENKDSTAKKQAEVQEARTALYSKLETVGNLVHDSVPVSNDEADNAVVRTWGERREETNLKNHVELVELLGIADLKKGANVAGGRGYYLKGDGVRLNQALINFGLDFLEKRKYTALQTPFFMRKDIMGKCAQLAQFDEELYKVTGEGDDKYLIATAEQPLCAYHIDDWIHPNELPLRYAGYSSCFRKEAGSHGRDTLGIFRVHQFEKVEQFCLTKPSGNDSWEMHEEMIKNSEEFYQMLKLPYQVVSIVSGALNDAAAKKYDLEAWFPASKTYRELVSCSNCTDYQSRKLEIRCGQKKGNEQAKQYCHLLNSTLTATERTLCCILENYQTEKGVAIPEVLQPFMGGKTFLDFLKKIKK.

235–237 (TAE) is an L-serine binding site. ATP-binding positions include 266 to 268 (RKE) and V282. E289 contributes to the L-serine binding site. 355-358 (ELVS) provides a ligand contact to ATP. An L-serine-binding site is contributed by T393.

Belongs to the class-II aminoacyl-tRNA synthetase family. Type-1 seryl-tRNA synthetase subfamily. As to quaternary structure, homodimer. The tRNA molecule binds across the dimer.

The enzyme catalyses tRNA(Ser) + L-serine + ATP = L-seryl-tRNA(Ser) + AMP + diphosphate + H(+). The catalysed reaction is tRNA(Sec) + L-serine + ATP = L-seryl-tRNA(Sec) + AMP + diphosphate + H(+). It participates in aminoacyl-tRNA biosynthesis; selenocysteinyl-tRNA(Sec) biosynthesis; L-seryl-tRNA(Sec) from L-serine and tRNA(Sec): step 1/1. In terms of biological role, catalyzes the attachment of serine to tRNA(Ser). Is also able to aminoacylate tRNA(Sec) with serine, to form the misacylated tRNA L-seryl-tRNA(Sec), which will be further converted into selenocysteinyl-tRNA(Sec). In Helianthus annuus (Common sunflower), this protein is Serine--tRNA ligase.